The primary structure comprises 105 residues: Large ribosomal subunit protein bL21 (105 aa).

It belongs to the bacterial ribosomal protein bL21 family. Part of the 50S ribosomal subunit. Contacts protein L20.

This protein binds to 23S rRNA in the presence of protein L20. The polypeptide is Large ribosomal subunit protein bL21 (Rhizobium rhizogenes (strain K84 / ATCC BAA-868) (Agrobacterium radiobacter)).